The chain runs to 1197 residues: Disease resistance-like protein CSA1 (1197 aa).

The region spanning 15–178 (PQDQVFINFR…IIIRKVKEIL (164 aa)) is the TIR domain. Glutamate 89 is a catalytic residue. The region spanning 210–480 (RIKQLEEKLR…ACFRSQDENY (271 aa)) is the NB-ARC domain. LRR repeat units lie at residues 614-636 (LNEV…DFNP), 638-659 (NLVD…NKDA), 694-716 (TALK…NLRG), 728-749 (LISL…QVIS), 750-774 (DKLE…RLQR), 776-796 (VMLN…LGQL), 797-819 (KALE…TWGN), 820-843 (MSRL…LSVR), 845-862 (LCLN…LLNK), and 863-889 (FSQL…NLQY).

It catalyses the reaction NAD(+) + H2O = ADP-D-ribose + nicotinamide + H(+). Its function is as follows. TIR-NB-LRR receptor-like protein that functions in photomorphogenic development. May function downstream of phytochrome B (phyB) signaling. This Arabidopsis thaliana (Mouse-ear cress) protein is Disease resistance-like protein CSA1.